We begin with the raw amino-acid sequence, 491 residues long: Serine/threonine-protein kinase 3/4 (491 aa).

The interval 1–24 is disordered; sequence MEEVQRRQHPHPRRSLKKLSEDSL. Basic residues predominate over residues 7–17; sequence RQHPHPRRSLK. A Protein kinase domain is found at 32–283; the sequence is FDVLEKLGEG…ATQLLQHPFI (252 aa). Residues 38–46 and K61 contribute to the ATP site; that span reads LGEGSYGSV. D151 (proton acceptor) is an active-site residue. Residue T185 is modified to Phosphothreonine; by autocatalysis. A coiled-coil region spans residues 292–334; sequence LRDLITDMMEIKLKRQEEQQRDLDQDDEENSEEDDMDSGTMVR. Disordered stretches follow at residues 307–394 and 406–435; these read QEEQ…IQQS and EKEN…PQDG. The span at 315 to 328 shows a compositional bias: acidic residues; it reads DQDDEENSEEDDMD. 2 stretches are compositionally biased toward polar residues: residues 363–373 and 410–428; these read TLDSQMGTMVI and QANS…SSDN. One can recognise an SARAH domain in the interval 437-484; it reads FESLKSWSVEELQRRLASLDPTMEQEIEEIRQRYQAKRQPILDAIDAK. Residues 442–475 adopt a coiled-coil conformation; that stretch reads SWSVEELQRRLASLDPTMEQEIEEIRQRYQAKRQ.

This sequence belongs to the protein kinase superfamily. STE Ser/Thr protein kinase family. STE20 subfamily. In terms of assembly, homodimer; mediated via the coiled-coil region. It depends on Mg(2+) as a cofactor. In terms of processing, proteolytically cleaved by caspase-3 during apoptosis at Asp-328 resulting in a 37 kDa form. Proteolytic cleavage results in kinase activation and nuclear translocation of the truncated form (MST1/N).

The protein localises to the cytoplasm. It localises to the nucleus. It carries out the reaction L-seryl-[protein] + ATP = O-phospho-L-seryl-[protein] + ADP + H(+). It catalyses the reaction L-threonyl-[protein] + ATP = O-phospho-L-threonyl-[protein] + ADP + H(+). Its activity is regulated as follows. Inhibited by the C-terminal non-catalytic region. Activated by caspase-cleavage. Full activation also requires homodimerization and autophosphorylation of Thr-185. Its function is as follows. Stress-activated, pro-apoptotic kinase which, following caspase-cleavage, enters the nucleus and induces chromatin condensation followed by internucleosomal DNA fragmentation. Key component of the Hippo signaling pathway which plays a pivotal role in organ size control and tumor suppression by restricting proliferation and promoting apoptosis. The core of this pathway is composed of a kinase cascade wherein stk3/mst2 and stk4/mst1, in complex with its regulatory protein sav1, phosphorylates and activates lats1/2 in complex with its regulatory protein mob1, which in turn phosphorylates and inactivates yap1 oncoprotein and wwtr1/taz. Phosphorylation of yap1 by lats2 inhibits its translocation into the nucleus to regulate cellular genes important for cell proliferation, cell death, and cell migration. Phosphorylates 'Ser-14' of histone H2B (H2BS14ph) during apoptosis. This is Serine/threonine-protein kinase 3/4 (STK4) from Squalus acanthias (Spiny dogfish).